The following is a 387-amino-acid chain: GDSL esterase/lipase At2g23540 (387 aa).

The first 32 residues, 1–32 (MATRASTSSRVSPAFTFLVIFFLLSLTASVEA), serve as a signal peptide directing secretion. The Nucleophile role is filled by Ser-55. Asn-139 and Asn-159 each carry an N-linked (GlcNAc...) asparagine glycan. Catalysis depends on residues Asp-352 and His-355. N-linked (GlcNAc...) asparagine glycosylation is present at Asn-380.

This sequence belongs to the 'GDSL' lipolytic enzyme family.

The protein resides in the secreted. The sequence is that of GDSL esterase/lipase At2g23540 from Arabidopsis thaliana (Mouse-ear cress).